Here is a 206-residue protein sequence, read N- to C-terminus: Small ribosomal subunit protein uS4 (206 aa).

Residues 96–161 (RRLDNVVYRM…QGRIQAALAL (66 aa)) form the S4 RNA-binding domain.

It belongs to the universal ribosomal protein uS4 family. Part of the 30S ribosomal subunit. Contacts protein S5. The interaction surface between S4 and S5 is involved in control of translational fidelity.

Functionally, one of the primary rRNA binding proteins, it binds directly to 16S rRNA where it nucleates assembly of the body of the 30S subunit. In terms of biological role, with S5 and S12 plays an important role in translational accuracy. This chain is Small ribosomal subunit protein uS4, found in Legionella pneumophila (strain Paris).